The sequence spans 472 residues: Fumarate hydratase class II (472 aa).

The segment at 1 to 20 is disordered; sequence MSPHENPSVETRTESDTFGP. Substrate is bound by residues 105 to 107, 136 to 139, 146 to 148, and Thr194; these read SGT, HPND, and SSN. The tract at residues 127 to 149 is disordered; that stretch reads GKRGGKSPVHPNDHCNRGQSSND. The active-site Proton donor/acceptor is His195. Ser325 is an active-site residue. Substrate contacts are provided by residues Ser326 and 331-333; that span reads KVN.

It belongs to the class-II fumarase/aspartase family. Fumarase subfamily. As to quaternary structure, homotetramer.

It localises to the cytoplasm. The enzyme catalyses (S)-malate = fumarate + H2O. The protein operates within carbohydrate metabolism; tricarboxylic acid cycle; (S)-malate from fumarate: step 1/1. In terms of biological role, involved in the TCA cycle. Catalyzes the stereospecific interconversion of fumarate to L-malate. This chain is Fumarate hydratase class II, found in Methylorubrum extorquens (strain ATCC 14718 / DSM 1338 / JCM 2805 / NCIMB 9133 / AM1) (Methylobacterium extorquens).